A 383-amino-acid polypeptide reads, in one-letter code: MSMIAHVINPGISGVKLACAVIEPGQNPAFPSHLQVSLTREELPLEAAPDELGLDALAERILEQTAAWPAPDAVVGRGGLMGRVPAGTYHVTPELARYVLENVSGSQPADDPNPGIGAPLALRVAQARGVPAYIVDPQSVDELLPEAHMTGVPGVRREARFHALNARAVARRAAYEVGKQFREARVVVAHLGVTTSVTAFDQGRAIDTTGTAPDGGPMGARQSGPLPTRAVIRLLQTQSESELLRLLTRGSGFFALTGTADLSEIERRQEQGEDSVVQTAIAAFVHQVCKAIGEQTAALPGRPDAVALTGGIARWDAVVDRIERRLAWVAPFIVLPGELELEALAEGAGRVLLGLEGVREWTPEGVTLRPAAPLVQVETVEEV.

Belongs to the acetokinase family.

It is found in the cytoplasm. The catalysed reaction is butanoate + ATP = butanoyl phosphate + ADP. This Deinococcus radiodurans (strain ATCC 13939 / DSM 20539 / JCM 16871 / CCUG 27074 / LMG 4051 / NBRC 15346 / NCIMB 9279 / VKM B-1422 / R1) protein is Probable butyrate kinase.